Consider the following 500-residue polypeptide: MLLLRPYEFWFVTGSQHLYGEEVLQQVEGHSRTIVNELNRDSVFPFSFVFKSVVTTPEEIRNVCLEANASEQCAGVITWMHTFSPAKMWIGGLLELRKPLLHLHTQFNRDIPWDSIDMDFMNLNQSAHGDREYGFIGARMGVARKVVVGHWEDPEVRERLAKWMRTAVAFAESRQLKVARFGDNMREVAVTEGDKVGAQIQFGWSVNGYGVGDLVQSIRDVSEQSINELLDEYAELYDMVPAGRQDGPVRESIREQARIELGLKAFLQDGNFTAFTTTFEDLHGMKQLPGLAVQRLMAEGYGFGGEGDWKTAALVRLMKVMADGKGTSFMEDYTYHFEPGNELILGAHMLEVCPTIAATRPRIEVHPLSIGGKEDPARLVFDGGEGAAVNASLIDLGHRFRLIVNEVDAVKPKHNMPKLPVARILWKPRPSLRDSAEAWILAGGAHHTCFSFAVTTEQLQDFAEIIGVECVVINEHTSVASFKNELRWNEVFWGRKQGLL.

Glutamate 306, glutamate 331, histidine 348, and histidine 447 together coordinate Mn(2+).

Belongs to the arabinose isomerase family. Mn(2+) serves as cofactor.

It carries out the reaction beta-L-arabinopyranose = L-ribulose. The protein operates within carbohydrate degradation; L-arabinose degradation via L-ribulose; D-xylulose 5-phosphate from L-arabinose (bacterial route): step 1/3. In terms of biological role, catalyzes the conversion of L-arabinose to L-ribulose. This Anoxybacillus flavithermus (strain DSM 21510 / WK1) protein is L-arabinose isomerase.